The sequence spans 280 residues: Bifunctional protein FolD (280 aa).

NADP(+)-binding positions include 166–168 (GRS) and serine 191.

It belongs to the tetrahydrofolate dehydrogenase/cyclohydrolase family. In terms of assembly, homodimer.

It catalyses the reaction (6R)-5,10-methylene-5,6,7,8-tetrahydrofolate + NADP(+) = (6R)-5,10-methenyltetrahydrofolate + NADPH. The enzyme catalyses (6R)-5,10-methenyltetrahydrofolate + H2O = (6R)-10-formyltetrahydrofolate + H(+). The protein operates within one-carbon metabolism; tetrahydrofolate interconversion. Functionally, catalyzes the oxidation of 5,10-methylenetetrahydrofolate to 5,10-methenyltetrahydrofolate and then the hydrolysis of 5,10-methenyltetrahydrofolate to 10-formyltetrahydrofolate. The protein is Bifunctional protein FolD of Saccharophagus degradans (strain 2-40 / ATCC 43961 / DSM 17024).